A 513-amino-acid polypeptide reads, in one-letter code: Calcium-dependent protein kinase 24 (513 aa).

Residues 1–33 (MQPDPSGSGGDGNANAKAKLAPPPVTAAGGRPV) are disordered. The region spanning 47–305 (YRIGKKLGQG…AHEVLCHPWI (259 aa)) is the Protein kinase domain. Residues 53–61 (LGQGQFGTT) and K76 each bind ATP. The Proton acceptor role is filled by D171. The autoinhibitory domain stretch occupies residues 311 to 341 (APDKPIDSAVLSRLKHFSAMNKLKKMALRVI). 4 consecutive EF-hand domains span residues 348 to 383 (EEIG…VGSE), 384 to 419 (LTEH…MNKL), 420 to 455 (EREE…FGLD), and 458 to 489 (HLED…GNAG). Ca(2+)-binding residues include D361, D363, S365, T367, E372, D397, D399, S401, T403, E408, D433, D435, S437, E444, D467, N469, D471, Q473, and E478.

It belongs to the protein kinase superfamily. Ser/Thr protein kinase family. CDPK subfamily. As to expression, expressed in roots.

The protein localises to the cytoplasm. It carries out the reaction L-seryl-[protein] + ATP = O-phospho-L-seryl-[protein] + ADP + H(+). It catalyses the reaction L-threonyl-[protein] + ATP = O-phospho-L-threonyl-[protein] + ADP + H(+). Activated by calcium. Autophosphorylation may play an important role in the regulation of the kinase activity. In terms of biological role, may play a role in signal transduction pathways that involve calcium as a second messenger. Possesses calcium-dependent protein kinase activity in vitro. The protein is Calcium-dependent protein kinase 24 of Oryza sativa subsp. japonica (Rice).